Reading from the N-terminus, the 421-residue chain is Mitochondrial distribution and morphology protein 10 (421 aa).

Belongs to the MDM10 family. In terms of assembly, component of the ER-mitochondria encounter structure (ERMES) or MDM complex, composed of MMM1, MDM10, MDM12 and MDM34. Associates with the mitochondrial outer membrane sorting assembly machinery SAM(core) complex.

The protein localises to the mitochondrion outer membrane. Component of the ERMES/MDM complex, which serves as a molecular tether to connect the endoplasmic reticulum and mitochondria. Components of this complex are involved in the control of mitochondrial shape and protein biogenesis and may function in phospholipid exchange. MDM10 is involved in the late assembly steps of the general translocase of the mitochondrial outer membrane (TOM complex). Functions in the TOM40-specific route of the assembly of outer membrane beta-barrel proteins, including the association of TOM40 with the receptor TOM22 and small TOM proteins. Can associate with the SAM(core) complex as well as the MDM12-MMM1 complex, both involved in late steps of the major beta-barrel assembly pathway, that is responsible for biogenesis of all outer membrane beta-barrel proteins. May act as a switch that shuttles between both complexes and channels precursor proteins into the TOM40-specific pathway. Plays a role in mitochondrial morphology and in the inheritance of mitochondria. This Vanderwaltozyma polyspora (strain ATCC 22028 / DSM 70294 / BCRC 21397 / CBS 2163 / NBRC 10782 / NRRL Y-8283 / UCD 57-17) (Kluyveromyces polysporus) protein is Mitochondrial distribution and morphology protein 10.